Here is a 207-residue protein sequence, read N- to C-terminus: Fibronectin type III domain-containing protein 5b (207 aa).

The N-terminal stretch at 1–26 (MWGIKGSFAVLLLLFLAYIFASSVNA) is a signal peptide. Over 27–146 (DSLSAPLNVT…EEVGQAAQLR (120 aa)) the chain is Extracellular. The region spanning 31–122 (APLNVTIKAL…EPVLFRTPKE (92 aa)) is the Fibronectin type-III domain. N34 and N79 each carry an N-linked (GlcNAc...) asparagine glycan. The helical transmembrane segment at 147–167 (AGELIIIVVVLVMWAGVIALF) threads the bilayer. The Cytoplasmic segment spans residues 168-207 (CRQYDIIKDNEPNNNKDKAKNSSECSTPEHPTGGLLRSKV). Residues 178 to 188 (EPNNNKDKAKN) are compositionally biased toward basic and acidic residues. Positions 178–207 (EPNNNKDKAKNSSECSTPEHPTGGLLRSKV) are disordered. The Microbody targeting signal signature appears at 205–207 (SKV).

In terms of assembly, dimer; may exist in other oligomeric forms. The extracellular domain is cleaved and released from the cell membrane.

Its subcellular location is the cell membrane. The protein resides in the peroxisome membrane. The protein localises to the secreted. Functionally, may mediate beneficial effects of muscular exercise. In Danio rerio (Zebrafish), this protein is Fibronectin type III domain-containing protein 5b (fndc5b).